The following is a 412-amino-acid chain: 5,5'-dehydrodivanillate O-demethylase ferredoxin reductase subunit (412 aa).

Positions 14, 49, 82, 130, 279, and 298 each coordinate FAD.

The protein belongs to the FAD-dependent oxidoreductase family. As to quaternary structure, monomer. The three-component monooxygenase is composed of an oxygenase (LigXa), a ferredoxin (LigXc) and a ferredoxin reductase (LigXd). It depends on FAD as a cofactor.

The enzyme catalyses 5,5'-dehydrodivanillate + NADH + O2 + H(+) = 2,2',3-trihydroxy-3'-methoxy-5,5'-dicarboxybiphenyl + formaldehyde + NAD(+) + H2O. In terms of biological role, involved in the catabolism of 5,5'-dehydrodivanillate (DDVA), an intermediate in the biodegradation of lignin. Part of a three-component monooxygenase that catalyzes the O-demethylation of DDVA, leading to the formation of 2,2',3-trihydroxy-3'-methoxy-5,5'-dicarboxybiphenyl (OH-DDVA). LigXd probably transfers the electrons from NADH to LigXc. In Sphingobium sp. (strain NBRC 103272 / SYK-6), this protein is 5,5'-dehydrodivanillate O-demethylase ferredoxin reductase subunit.